The following is a 283-amino-acid chain: Nudix hydrolase 6 (283 aa).

The region spanning 101–233 (SHRIGVGAFV…KKELFRFMAN (133 aa)) is the Nudix hydrolase domain. The Nudix box motif lies at 139-160 (GVVKEGENIWEGALREVEEETG). A divalent metal cation contacts are provided by Glu154, Glu158, and Glu204.

This sequence belongs to the Nudix hydrolase family. Mg(2+) serves as cofactor. It depends on Mn(2+) as a cofactor. In terms of tissue distribution, expressed in stems and leaves. Weakly or not expressed in roots.

The enzyme catalyses ADP-D-ribose + H2O = D-ribose 5-phosphate + AMP + 2 H(+). It carries out the reaction NAD(+) + H2O = beta-nicotinamide D-ribonucleotide + AMP + 2 H(+). It catalyses the reaction NADH + H2O = reduced beta-nicotinamide D-ribonucleotide + AMP + 2 H(+). Its function is as follows. Probably mediates the hydrolysis of some nucleoside diphosphate derivatives. In vitro, it can use both NADH and ADP-ribose as substrates; however the relevance of such substrates in vivo is unclear. This chain is Nudix hydrolase 6, found in Arabidopsis thaliana (Mouse-ear cress).